The primary structure comprises 445 residues: Ribosome biogenesis protein YTM1 (445 aa).

The ubiquitin-like (UBL) domain stretch occupies residues 8-89; it reads VKVKFFTREQ…EAVLNVEYTR (82 aa). Residues 99 to 445 form a sufficient for interaction with ERB1 and association with 66S pre-ribosomes region; that stretch reads SFSNEDWVSA…FNKGDNIFKN (347 aa). WD repeat units lie at residues 101 to 138, 140 to 178, 195 to 232, 270 to 310, 312 to 351, 358 to 398, and 409 to 445; these read SNED…EKQY, GHTG…VKHV, GHQA…MTAV, SHKA…CVDT, STSY…SAKI, GHKN…SIYT, and GIND…IFKN.

The protein belongs to the WD repeat WDR12/YTM1 family. Component of the NOP7 complex, composed of ERB1, NOP7 and YTM1. The complex is held together by ERB1, which interacts with NOP7 via its N-terminal domain and with YTM1 via a high-affinity interaction between the seven-bladed beta-propeller domains of the 2 proteins. The NOP7 complex associates with the 66S pre-ribosome. Interacts (via UBL domain) with MDN1 (via VWFA/MIDAS domain).

It is found in the nucleus. The protein resides in the nucleolus. The protein localises to the nucleoplasm. Functionally, component of the NOP7 complex, which is required for maturation of the 25S and 5.8S ribosomal RNAs and formation of the 60S ribosome. The polypeptide is Ribosome biogenesis protein YTM1 (Eremothecium gossypii (strain ATCC 10895 / CBS 109.51 / FGSC 9923 / NRRL Y-1056) (Yeast)).